The primary structure comprises 193 residues: dCTP deaminase, dUMP-forming (193 aa).

Residues 101–106 (KSSLGR), aspartate 119, 127–129 (TLE), glutamine 148, tyrosine 162, and glutamine 174 contribute to the dCTP site. Glutamate 129 serves as the catalytic Proton donor/acceptor. The segment at 160 to 193 (TPYGSGSLGSKYQGQRGPTPSKGYLNFSSEQDSD) is disordered. Over residues 167 to 177 (LGSKYQGQRGP) the composition is skewed to polar residues.

It belongs to the dCTP deaminase family. In terms of assembly, homotrimer.

The enzyme catalyses dCTP + 2 H2O = dUMP + NH4(+) + diphosphate. It participates in pyrimidine metabolism; dUMP biosynthesis; dUMP from dCTP: step 1/1. Its function is as follows. Bifunctional enzyme that catalyzes both the deamination of dCTP to dUTP and the hydrolysis of dUTP to dUMP without releasing the toxic dUTP intermediate. The protein is dCTP deaminase, dUMP-forming of Corynebacterium efficiens (strain DSM 44549 / YS-314 / AJ 12310 / JCM 11189 / NBRC 100395).